Here is a 364-residue protein sequence, read N- to C-terminus: 2-oxoglutarate-dependent dioxygenase imqE (364 aa).

The disordered stretch occupies residues K73–G92. Residues D199–A315 form the Fe2OG dioxygenase domain. 3 residues coordinate Fe cation: H227, D229, and H287. Position 306 (R306) interacts with 2-oxoglutarate.

Belongs to the iron/ascorbate-dependent oxidoreductase family. Requires Fe(2+) as cofactor.

Its pathway is secondary metabolite biosynthesis. In terms of biological role, 2-oxoglutarate-dependent dioxygenase; part of the gene cluster that mediates the biosynthesis of imizoquins A to D, tripeptide-derived alkaloids that serve a protective role against oxidative stress that are essential for normal germination. ImqB is a canonical three-module NRPS that assembles the tripeptide backbone of the imizoquins via condensation of Trp, Tyr, and Leu-derived precursors. N-methylation by imqF and phenol oxidation by imqC, followed by cyclization via the FAD-dependent oxidase imqH carry out the three-step transformation of L-tyrosine into tetrahydroisoquinoline. Importantly, this sequence requires the presence of a free amine in the tyrosine moiety, indicating that isoquinoline formation occurs prior to peptide bond formation. The imidazolidin-4-one ring of imizoquins could form following additional oxidation of the methyl-derived bridgehead carbon by imqH. Lastly, O-methylation by imqG and leucine hydroxylation by imqE complete biosynthesis of the imizoquins. The sequence is that of 2-oxoglutarate-dependent dioxygenase imqE from Aspergillus flavus (strain ATCC 200026 / FGSC A1120 / IAM 13836 / NRRL 3357 / JCM 12722 / SRRC 167).